Consider the following 496-residue polypeptide: Glutamyl-tRNA(Gln) amidotransferase subunit A (496 aa).

Catalysis depends on charge relay system residues K75 and S150. The active-site Acyl-ester intermediate is the S174.

Belongs to the amidase family. GatA subfamily. In terms of assembly, heterotrimer of A, B and C subunits.

The enzyme catalyses L-glutamyl-tRNA(Gln) + L-glutamine + ATP + H2O = L-glutaminyl-tRNA(Gln) + L-glutamate + ADP + phosphate + H(+). Its function is as follows. Allows the formation of correctly charged Gln-tRNA(Gln) through the transamidation of misacylated Glu-tRNA(Gln) in organisms which lack glutaminyl-tRNA synthetase. The reaction takes place in the presence of glutamine and ATP through an activated gamma-phospho-Glu-tRNA(Gln). In Burkholderia pseudomallei (strain 1106a), this protein is Glutamyl-tRNA(Gln) amidotransferase subunit A.